A 187-amino-acid chain; its full sequence is Elongation factor P (187 aa).

The protein belongs to the elongation factor P family.

It localises to the cytoplasm. It functions in the pathway protein biosynthesis; polypeptide chain elongation. Its function is as follows. Involved in peptide bond synthesis. Stimulates efficient translation and peptide-bond synthesis on native or reconstituted 70S ribosomes in vitro. Probably functions indirectly by altering the affinity of the ribosome for aminoacyl-tRNA, thus increasing their reactivity as acceptors for peptidyl transferase. This Mycolicibacterium gilvum (strain PYR-GCK) (Mycobacterium gilvum (strain PYR-GCK)) protein is Elongation factor P.